The sequence spans 123 residues: Large ribosomal subunit protein uL14 (123 aa).

It belongs to the universal ribosomal protein uL14 family. In terms of assembly, part of the 50S ribosomal subunit. Forms a cluster with proteins L3 and L19. In the 70S ribosome, L14 and L19 interact and together make contacts with the 16S rRNA in bridges B5 and B8.

Binds to 23S rRNA. Forms part of two intersubunit bridges in the 70S ribosome. This Koribacter versatilis (strain Ellin345) protein is Large ribosomal subunit protein uL14.